The sequence spans 354 residues: Large ribosomal subunit protein uL10 (354 aa).

Composition is skewed to acidic residues over residues 286 to 296 (DEEALPEELQD) and 307 to 345 (AEAD…DGDG). The disordered stretch occupies residues 286-354 (DEEALPEELQ…GGDALGDMFG (69 aa)).

It belongs to the universal ribosomal protein uL10 family. In terms of assembly, part of the 50S ribosomal subunit. Forms part of the ribosomal stalk which helps the ribosome interact with GTP-bound translation factors. Forms a heptameric L10(L12)2(L12)2(L12)2 complex, where L10 forms an elongated spine to which the L12 dimers bind in a sequential fashion.

Functionally, forms part of the ribosomal stalk, playing a central role in the interaction of the ribosome with GTP-bound translation factors. The polypeptide is Large ribosomal subunit protein uL10 (Natronomonas pharaonis (strain ATCC 35678 / DSM 2160 / CIP 103997 / JCM 8858 / NBRC 14720 / NCIMB 2260 / Gabara) (Halobacterium pharaonis)).